The primary structure comprises 191 residues: C-type lectin domain family 2 member D (191 aa).

The Cytoplasmic portion of the chain corresponds to Met1 to Leu38. Residues Phe39 to Ile59 form a helical; Signal-anchor for type II membrane protein membrane-spanning segment. Residues Arg60 to Val191 lie on the Extracellular side of the membrane. Cysteines 75 and 86 form a disulfide. In terms of domain architecture, C-type lectin spans Phe82–Ser185. N-linked (GlcNAc...) asparagine glycans are attached at residues Asn95 and Asn147. A disulfide bridge connects residues Cys103 and Cys184.

In terms of assembly, homodimer; disulfide-linked. Post-translationally, N-glycosylated. As to expression, detected in peripheral blood leukocytes, osteoblasts, lymph node, thymus and spleen. Isoform 1, isoform 2 and isoform 4 are expressed in T- and B-lymphocytes, and at lower levels in NK cells. They are also expressed in B-cell lines and LPS-matured monocyte-derived dendritic cells.

The protein localises to the cell membrane. Its subcellular location is the endoplasmic reticulum. In terms of biological role, receptor for KLRB1 that protects target cells against natural killer cell-mediated lysis. Inhibits osteoclast formation. Inhibits bone resorption. Modulates the release of interferon-gamma. Binds high molecular weight sulfated glycosaminoglycans. The sequence is that of C-type lectin domain family 2 member D (CLEC2D) from Homo sapiens (Human).